The following is a 175-amino-acid chain: MLHRLAFPVMSWMLLSCLMLLSQVQGEDSPKKIPSARISCPKGSQAYGSYCYALFQIPQTWFDAELACQKRPEGHLVSVLNVAEASFLASMVKNTGNSYQYTWIGLHDPTLGGEPNGGGWEWSNNDIMNYVNWERNPSTALDRGFCGSLSRSSGFLRWRDTTCEVKLPYVCKFTG.

Residues 1–26 (MLHRLAFPVMSWMLLSCLMLLSQVQG) form the signal peptide. Residues 27-37 (EDSPKKIPSAR) constitute a propeptide that is removed on maturation. 3 disulfide bridges follow: Cys40–Cys51, Cys68–Cys171, and Cys146–Cys163. The C-type lectin domain maps to 47 to 172 (YGSYCYALFQ…CEVKLPYVCK (126 aa)). Zn(2+) is bound at residue His107. An EPN motif is present at residues 114–116 (EPN). Zn(2+) is bound at residue Glu121.

As to quaternary structure, forms a hexameric membrane-permeabilizing oligomeric pore on membrane phospholipids. The hexamer is formed by three dimers related by helical symmetry. Forms filaments, filamentation traps pore complexes and limits damage to host cells. Interacts with EXTL3. In terms of processing, proteolytic processing by trypsin removes an inhibitory N-terminal propeptide and is essential for peptidoglycan binding and antibacterial activity. Constitutively expressed in intestine.

It is found in the secreted. Lipopolysaccharide inhibits pore-forming activity, explaining why is bactericidal for Gram-positive but not Gram-negative bacteria. Bactericidal C-type lectin which acts against several intestinal Gram-positive bacteria and Gram-negative bacteria. Lacks antibacterial activity against S.typhimurium. May play a role in protection against infection with S.enteritidis by inhibiting its translocation from the gut lumen into intestinal tissues and further extraintestinal tissues. Its function is as follows. Acts as a hormone in response to different stimuli. Secreted by different cell types to activate its receptor EXTL3 and induce cell specific signaling pathways. In pancreas, is able stimulate cell proliferation. This Rattus norvegicus (Rat) protein is Regenerating islet-derived protein 3-beta.